A 337-amino-acid polypeptide reads, in one-letter code: Quinolinate synthase (337 aa).

Residues His-40 and Ser-57 each coordinate iminosuccinate. Cys-102 contributes to the [4Fe-4S] cluster binding site. Residues 128 to 130 (YVN) and Ser-145 contribute to the iminosuccinate site. Cys-189 is a binding site for [4Fe-4S] cluster. Iminosuccinate-binding positions include 215–217 (HPE) and Thr-243. Cys-288 lines the [4Fe-4S] cluster pocket.

This sequence belongs to the quinolinate synthase family. Type 2 subfamily. [4Fe-4S] cluster is required as a cofactor.

The protein resides in the cytoplasm. It catalyses the reaction iminosuccinate + dihydroxyacetone phosphate = quinolinate + phosphate + 2 H2O + H(+). The protein operates within cofactor biosynthesis; NAD(+) biosynthesis; quinolinate from iminoaspartate: step 1/1. In terms of biological role, catalyzes the condensation of iminoaspartate with dihydroxyacetone phosphate to form quinolinate. The sequence is that of Quinolinate synthase from Mycobacterium sp. (strain JLS).